Consider the following 253-residue polypeptide: Chloride intracellular channel protein 4 (253 aa).

At Ala2 the chain carries N-acetylalanine. A required for insertion into the membrane region spans residues 2-101; the sequence is ALSMPLNGLK…EEFLEEVLCP (100 aa). Ser4 carries the phosphoserine modification. Lys24 is modified (N6-acetyllysine). The G-site motif lies at 35–38; the sequence is CPFS. A helical membrane pass occupies residues 37–57; it reads FSQRLFMILWLKGVVFSVTTV. The GST C-terminal domain occupies 81–244; it reads NSEVKTDVNK…PSDKEVEIAY (164 aa). Lys130 carries the post-translational modification N6-acetyllysine. Phosphoserine is present on residues Ser132, Ser167, and Ser236. A Phosphotyrosine modification is found at Tyr244.

This sequence belongs to the chloride channel CLIC family. In terms of assembly, monomer. Interacts with HRH3. As to expression, detected in brain, in cell bodies and dendrites of Purkinje cells in cerebellar neurons (at protein level). Expressed neonatal and adult cardiomyocytes (at protein level). Marked expression was found in hippocampus and cerebellum, and in many other tissues.

It is found in the cytoplasm. It localises to the cytoskeleton. The protein localises to the microtubule organizing center. The protein resides in the centrosome. Its subcellular location is the cytoplasmic vesicle membrane. It is found in the nucleus. It localises to the cell membrane. The protein localises to the mitochondrion. The protein resides in the cell junction. Its subcellular location is the endoplasmic reticulum membrane. The enzyme catalyses chloride(in) = chloride(out). It catalyses the reaction thiocyanate(in) = thiocyanate(out). The catalysed reaction is nitrate(in) = nitrate(out). It carries out the reaction iodide(out) = iodide(in). The enzyme catalyses bromide(in) = bromide(out). It catalyses the reaction fluoride(in) = fluoride(out). The catalysed reaction is choline(out) = choline(in). Its activity is regulated as follows. Channel activity is redox- and pH-regulated. Anion vs cation selectivity is enhanced when fully oxidized. Functionally, in the soluble state, catalyzes glutaredoxin-like thiol disulfide exchange reactions with reduced glutathione as electron donor. Can insert into membranes and form voltage-dependent multi-ion conductive channels. Membrane insertion seems to be redox-regulated and may occur only under oxidizing conditions. Has alternate cellular functions like a potential role in angiogenesis or in maintaining apical-basolateral membrane polarity during mitosis and cytokinesis. Could also promote endothelial cell proliferation and regulate endothelial morphogenesis (tubulogenesis). Promotes cell-surface expression of HRH3. The sequence is that of Chloride intracellular channel protein 4 (Clic4) from Rattus norvegicus (Rat).